Consider the following 344-residue polypeptide: MRNMITMGEFIVKKQADYPTATGELTSLLSSIRLAAKVVNREINKAGLADIIGSMGAENVQGEVQQKLDVYANERFKAALEARGEVCGIASEEEEDFVSFDSELSRHSKYVVLIDPLDGSSNIDVNVSVGTIFSIYRRLSAPGTGVTLEDFLQPGNRQVAAGYVVYGSSTMLVYTTGFGVNGFTYDPSIGCFCLSHENIRIPEEGKIYSINEGNYIKFPDGVKKYLKYCQERDEATHRPYTSRYIGSLVSDFHRNLLKGGIYIYPSGTNSPNGKLRLLYECNPMAFLVEQAGGKASDGFGRIMDIQPTALHQRTPYFVGSTKMVERAEAFMREFSAHEDPANQG.

Mg(2+) contacts are provided by Glu92, Asp115, Leu117, and Asp118. Substrate-binding positions include 118 to 121 (DGSS), Asn211, Tyr244, and Lys274. Glu280 is a binding site for Mg(2+).

It belongs to the FBPase class 1 family. Homotetramer. Mg(2+) serves as cofactor.

It localises to the cytoplasm. The catalysed reaction is beta-D-fructose 1,6-bisphosphate + H2O = beta-D-fructose 6-phosphate + phosphate. The protein operates within carbohydrate biosynthesis; gluconeogenesis. The protein is Fructose-1,6-bisphosphatase class 1 of Aeromonas salmonicida (strain A449).